Reading from the N-terminus, the 173-residue chain is MQKVKLPLTLDPVRTAQKRLDYQGIYTPDQVERVAESVVSVDSDVECSMSFAIDNQRLAVLNGDAKVTVTLECQRCGKPFTHQVYTTYCFSPVRSDEQAEALPEAYEPIEVNEFGEIDLLAMVEDEIILALPVVPVHDSEHCEVSEADMVFGELPEEAQKPNPFAVLASLKRK.

It belongs to the DUF177 domain family.

Functionally, plays a role in synthesis, processing and/or stability of 23S rRNA. The chain is Large ribosomal RNA subunit accumulation protein YceD (yceD) from Escherichia coli O157:H7.